Consider the following 102-residue polypeptide: Small ribosomal subunit protein uS10 (102 aa).

Belongs to the universal ribosomal protein uS10 family. As to quaternary structure, part of the 30S ribosomal subunit.

Functionally, involved in the binding of tRNA to the ribosomes. The protein is Small ribosomal subunit protein uS10 of Xanthobacter autotrophicus (strain ATCC BAA-1158 / Py2).